We begin with the raw amino-acid sequence, 150 residues long: Ribosome maturation factor RimP (150 aa).

The protein belongs to the RimP family.

It is found in the cytoplasm. Required for maturation of 30S ribosomal subunits. The protein is Ribosome maturation factor RimP of Francisella tularensis subsp. holarctica (strain LVS).